The sequence spans 369 residues: Queuine tRNA-ribosyltransferase (369 aa).

The Proton acceptor role is filled by aspartate 89. Residues 89 to 93, aspartate 142, glutamine 184, and glycine 211 contribute to the substrate site; that span reads DSGGF. The RNA binding stretch occupies residues 242–248; that stretch reads GGGSPEL. Aspartate 261 acts as the Nucleophile in catalysis. The RNA binding; important for wobble base 34 recognition stretch occupies residues 266 to 270; that stretch reads TRIAR. Residues cysteine 299, cysteine 301, cysteine 304, and histidine 330 each coordinate Zn(2+).

Belongs to the queuine tRNA-ribosyltransferase family. As to quaternary structure, homodimer. Within each dimer, one monomer is responsible for RNA recognition and catalysis, while the other monomer binds to the replacement base PreQ1. Zn(2+) is required as a cofactor.

The catalysed reaction is 7-aminomethyl-7-carbaguanine + guanosine(34) in tRNA = 7-aminomethyl-7-carbaguanosine(34) in tRNA + guanine. It functions in the pathway tRNA modification; tRNA-queuosine biosynthesis. Its function is as follows. Catalyzes the base-exchange of a guanine (G) residue with the queuine precursor 7-aminomethyl-7-deazaguanine (PreQ1) at position 34 (anticodon wobble position) in tRNAs with GU(N) anticodons (tRNA-Asp, -Asn, -His and -Tyr). Catalysis occurs through a double-displacement mechanism. The nucleophile active site attacks the C1' of nucleotide 34 to detach the guanine base from the RNA, forming a covalent enzyme-RNA intermediate. The proton acceptor active site deprotonates the incoming PreQ1, allowing a nucleophilic attack on the C1' of the ribose to form the product. After dissociation, two additional enzymatic reactions on the tRNA convert PreQ1 to queuine (Q), resulting in the hypermodified nucleoside queuosine (7-(((4,5-cis-dihydroxy-2-cyclopenten-1-yl)amino)methyl)-7-deazaguanosine). In Thermotoga sp. (strain RQ2), this protein is Queuine tRNA-ribosyltransferase.